The primary structure comprises 1036 residues: Multiple C2 domain and transmembrane region protein 2 (1036 aa).

A C2 1 domain is found at 1 to 110 (MRNTTKLVVH…YKDDQVYQRF (110 aa)). Disordered regions lie at residues 137 to 204 (DQTF…PVQK) and 225 to 246 (RENPHEAQKPMSRGANQLHPQN). The span at 146 to 155 (PYTSPTQASA) shows a compositional bias: polar residues. Positions 158–168 (TEEDTADSETE) are enriched in acidic residues. Basic and acidic residues predominate over residues 190–204 (VEGKKSEEVKEPVQK). 3 C2 domains span residues 277 to 399 (PNAG…PQWY), 440 to 563 (VHGE…SRWF), and 607 to 734 (YISD…THSF). Positions 316, 364, 366, and 372 each coordinate Ca(2+). The next 2 membrane-spanning stretches (helical) occupy residues 871–891 (FILVMYPELILPTMFLYMFFI) and 979–999 (LFILFCLAASVVLYAMPFKAI).

This sequence belongs to the MCTP family. Requires Ca(2+) as cofactor. Expressed in the vascular tissues of roots and rosette leaves. Accumulates in roots meristems. Observed in flowers.

It is found in the cell membrane. May function as a signaling molecule by regulating the trafficking of other regulators. The protein is Multiple C2 domain and transmembrane region protein 2 of Arabidopsis thaliana (Mouse-ear cress).